The chain runs to 232 residues: Ubiquitin carboxyl-terminal hydrolase UCHL3 (232 aa).

One can recognise a UCH catalytic domain in the interval 6–225; sequence IWTPLESNPD…LRFSALAVIP (220 aa). Positions 10 to 14 are interaction with ubiquitin; it reads LESNP. Cys92 acts as the Nucleophile in catalysis. The crossover loop which restricts access of large ubiquitin adducts to the active site stretch occupies residues 151–159; it reads QVENRDDIL. Positions 163–165 are interaction with ubiquitin; that stretch reads THF. His164 (proton donor) is an active-site residue.

Belongs to the peptidase C12 family.

It carries out the reaction Thiol-dependent hydrolysis of ester, thioester, amide, peptide and isopeptide bonds formed by the C-terminal Gly of ubiquitin (a 76-residue protein attached to proteins as an intracellular targeting signal).. Thiol protease that recognizes and hydrolyzes a peptide bond at the C-terminal glycine of either ubiquitin or NEDD8. Essential for parasite blood stage survival. The sequence is that of Ubiquitin carboxyl-terminal hydrolase UCHL3 from Plasmodium falciparum (isolate 3D7).